We begin with the raw amino-acid sequence, 51 residues long: Protein I177L (51 aa).

Asn-11 is a glycosylation site (N-linked (GlcNAc...) asparagine; by host).

This sequence belongs to the asfivirus I177L family.

It is found in the virion. The polypeptide is Protein I177L (Ornithodoros (relapsing fever ticks)).